The chain runs to 224 residues: uncharacterized protein (224 aa).

The segment covering Thr-44–Leu-139 has biased composition (pro residues). The interval Thr-44 to Tyr-145 is disordered.

This is an uncharacterized protein from Lepidoptera (butterflies and moths).